The primary structure comprises 387 residues: Succinate--CoA ligase [ADP-forming] subunit beta (387 aa).

An ATP-grasp domain is found at 9–244 (KEVLRKFGVA…LNEEEPSEIE (236 aa)). ATP-binding positions include lysine 46, 53–55 (GRG), glutamate 99, cysteine 102, and glutamate 107. Mg(2+)-binding residues include asparagine 199 and aspartate 213. Substrate contacts are provided by residues asparagine 264 and 321–323 (GIM).

It belongs to the succinate/malate CoA ligase beta subunit family. As to quaternary structure, heterotetramer of two alpha and two beta subunits. Mg(2+) serves as cofactor.

It catalyses the reaction succinate + ATP + CoA = succinyl-CoA + ADP + phosphate. It carries out the reaction GTP + succinate + CoA = succinyl-CoA + GDP + phosphate. The protein operates within carbohydrate metabolism; tricarboxylic acid cycle; succinate from succinyl-CoA (ligase route): step 1/1. Functionally, succinyl-CoA synthetase functions in the citric acid cycle (TCA), coupling the hydrolysis of succinyl-CoA to the synthesis of either ATP or GTP and thus represents the only step of substrate-level phosphorylation in the TCA. The beta subunit provides nucleotide specificity of the enzyme and binds the substrate succinate, while the binding sites for coenzyme A and phosphate are found in the alpha subunit. This chain is Succinate--CoA ligase [ADP-forming] subunit beta, found in Bdellovibrio bacteriovorus (strain ATCC 15356 / DSM 50701 / NCIMB 9529 / HD100).